A 204-amino-acid polypeptide reads, in one-letter code: Glycerol-3-phosphate acyltransferase (204 aa).

5 consecutive transmembrane segments (helical) span residues 6–26, 80–100, 122–142, 144–164, and 168–188; these read YIII…YIVA, LVGI…VAGH, LAVN…VVAI, KYVS…MIMV, and AGLI…RANI.

It belongs to the PlsY family. As to quaternary structure, probably interacts with PlsX.

It is found in the cell membrane. The enzyme catalyses an acyl phosphate + sn-glycerol 3-phosphate = a 1-acyl-sn-glycero-3-phosphate + phosphate. It functions in the pathway lipid metabolism; phospholipid metabolism. Catalyzes the transfer of an acyl group from acyl-phosphate (acyl-PO(4)) to glycerol-3-phosphate (G3P) to form lysophosphatidic acid (LPA). This enzyme utilizes acyl-phosphate as fatty acyl donor, but not acyl-CoA or acyl-ACP. This is Glycerol-3-phosphate acyltransferase from Clostridioides difficile (strain 630) (Peptoclostridium difficile).